We begin with the raw amino-acid sequence, 151 residues long: UPF0098 protein MTH_273 (151 aa).

This sequence belongs to the UPF0098 family.

This Methanothermobacter thermautotrophicus (strain ATCC 29096 / DSM 1053 / JCM 10044 / NBRC 100330 / Delta H) (Methanobacterium thermoautotrophicum) protein is UPF0098 protein MTH_273.